Consider the following 99-residue polypeptide: MSSRSHRSRKYQLTRTIPILVLLLVLLSCCNGARTTNVFNTSSPPKQKDVVSPPHDHVHHQVQDHKSVQFLGSLPRQFPVPTSGPSRKHNEIGLSSTKT.

The first 32 residues, 1 to 32 (MSSRSHRSRKYQLTRTIPILVLLLVLLSCCNG), serve as a signal peptide directing secretion. The segment covering 36-45 (TNVFNTSSPP) has biased composition (polar residues). 2 disordered regions span residues 36–58 (TNVF…HDHV) and 73–99 (SLPR…STKT). The span at 46–58 (KQKDVVSPPHDHV) shows a compositional bias: basic and acidic residues.

As to expression, expressed in flowers and seedlings. Detected at the base of pedicel, in the floral abscission zone and in vascular tissues.

It is found in the secreted. The protein localises to the extracellular space. Its function is as follows. May be involved in floral abscission. This chain is Protein IDA-LIKE 3 (IDL3), found in Arabidopsis thaliana (Mouse-ear cress).